Here is a 492-residue protein sequence, read N- to C-terminus: G2/mitotic-specific cyclin CYB1 (492 aa).

A disordered region spans residues 1–176 (MPQVTKTNNE…QPEVGERSQS (176 aa)). A compositionally biased stretch (polar residues) spans 23 to 33 (QESISTIKNTT). Residues 34-58 (ISNSQHKQQTQQQISSPPQVSVTSS) are compositionally biased toward low complexity. A compositionally biased stretch (polar residues) spans 59–83 (EGVSHVNTRQYLGDVSNQYITNAKP). Residues 111–135 (ASDNNNNGSTSSSSNSSNNNNNDAN) show a composition bias toward low complexity.

The protein belongs to the cyclin family. Cyclin AB subfamily.

Functionally, essential for the control of the cell cycle at the G2/M (mitosis) transition. Interacts with the CDC2 protein kinase to form MPF. G2/M cyclins accumulate steadily during G2 and are abruptly destroyed at mitosis. The sequence is that of G2/mitotic-specific cyclin CYB1 (CYB1) from Candida albicans (Yeast).